The sequence spans 501 residues: Probable cytosol aminopeptidase (501 aa).

Residues Lys-268 and Asp-273 each contribute to the Mn(2+) site. Lys-280 is an active-site residue. Mn(2+) is bound by residues Asp-291, Asp-350, and Glu-352. Arg-354 is an active-site residue.

This sequence belongs to the peptidase M17 family. Requires Mn(2+) as cofactor.

The protein resides in the cytoplasm. The enzyme catalyses Release of an N-terminal amino acid, Xaa-|-Yaa-, in which Xaa is preferably Leu, but may be other amino acids including Pro although not Arg or Lys, and Yaa may be Pro. Amino acid amides and methyl esters are also readily hydrolyzed, but rates on arylamides are exceedingly low.. It carries out the reaction Release of an N-terminal amino acid, preferentially leucine, but not glutamic or aspartic acids.. Its function is as follows. Presumably involved in the processing and regular turnover of intracellular proteins. Catalyzes the removal of unsubstituted N-terminal amino acids from various peptides. This is Probable cytosol aminopeptidase from Pseudoalteromonas atlantica (strain T6c / ATCC BAA-1087).